A 1014-amino-acid polypeptide reads, in one-letter code: Calcium-transporting ATPase 2, plasma membrane-type (1014 aa).

An N-acetylmethionine modification is found at M1. Residues 1–160 (MESYLNENFD…NKFAESEMRG (160 aa)) lie on the Cytoplasmic side of the membrane. The tract at residues 20 to 31 (VLEKWRNLCGVV) is interaction with calmodulin. At S45 the chain carries Phosphoserine; by CPK1. The helical transmembrane segment at 161–181 (FWVFVWEALQDMTLMILGVCA) threads the bilayer. The Lumenal segment spans residues 182-199 (FVSLIVGIATEGWPKGSH). Residues 200 to 220 (DGLGIAASILLVVFVTATSDY) traverse the membrane as a helical segment. The Cytoplasmic portion of the chain corresponds to 221–348 (RQSLQFRDLD…DDETPLQVKL (128 aa)). Residues 349–368 (NGVATIIGKIGLFFAVVTFA) traverse the membrane as a helical segment. Topologically, residues 369 to 398 (VLVQGMFMRKLSTGTHWVWSGDEALELLEY) are lumenal. A helical transmembrane segment spans residues 399–416 (FAIAVTIVVVAVPEGLPL). The Cytoplasmic portion of the chain corresponds to 417-810 (AVTLSLAFAM…KWGRSVYINI (394 aa)). The active-site 4-aspartylphosphate intermediate is D454. Mg(2+)-binding residues include D755 and D759. Residues 811–829 (QKFVQFQLTVNVVALVVNF) form a helical membrane-spanning segment. Residues 830 to 840 (SSACLTGSAPL) are Lumenal-facing. The chain crosses the membrane as a helical span at residues 841–861 (TAVQLLWVNMIMDTLGALALA). Topologically, residues 862 to 881 (TEPPNDELMKRLPVGRRGNF) are cytoplasmic. The chain crosses the membrane as a helical span at residues 882 to 904 (ITNAMWRNILGQAVYQFIVIWIL). The Lumenal segment spans residues 905 to 916 (QAKGKAMFGLDG). A helical membrane pass occupies residues 917 to 938 (PDSTLMLNTLIFNCFVFCQVFN). The Cytoplasmic portion of the chain corresponds to 939-956 (EISSREMEEIDVFKGILD). Residues 957-978 (NYVFVVVIGATVFFQIIIIEFL) form a helical membrane-spanning segment. The Lumenal portion of the chain corresponds to 979–988 (GTFASTTPLT). Residues 989–1010 (ITQWIFSIFIGFLGMPIAAGLK) form a helical membrane-spanning segment. Over 1011–1014 (TIPV) the chain is Cytoplasmic.

The protein belongs to the cation transport ATPase (P-type) (TC 3.A.3) family. Type IIB subfamily.

It localises to the endoplasmic reticulum membrane. It catalyses the reaction Ca(2+)(in) + ATP + H2O = Ca(2+)(out) + ADP + phosphate + H(+). Activated by calmodulin. This magnesium-dependent enzyme catalyzes the hydrolysis of ATP coupled with the translocation of calcium from the cytosol into the endoplasmic reticulum. The sequence is that of Calcium-transporting ATPase 2, plasma membrane-type (ACA2) from Arabidopsis thaliana (Mouse-ear cress).